Reading from the N-terminus, the 605-residue chain is F-box/WD repeat-containing protein 1A (605 aa).

The tract at residues 128 to 177 (ASYEKEKELCVKYFEQWSESDQVEFVEHLISQMCHYQHGHINSYLKPMLQ) is homodimerization domain D. Residues 182–228 (TALPARGLDHIAENILSYLDAKSLCAAELVCKEWYRVTSDGMLWKKL) form the F-box domain. The tract at residues 190–228 (DHIAENILSYLDAKSLCAAELVCKEWYRVTSDGMLWKKL) is required for down-regulation of SNAI1. 7 WD repeats span residues 301–338 (ETSK…CKRI), 341–378 (GHTG…MLNT), 381–418 (HHCE…DITL), 424–461 (GHRA…FVRT), 464–503 (GHKR…RVLE), 505–541 (HEEL…DPRA), and 553–590 (EHSG…AAHA).

In terms of assembly, homodimer. Self-associates. Component of the SCF(BTRC) complex, composed of SKP1, CUL1 and BTRC. Direct interaction with SKP1 with SKP1 occurs via the F-box domain. Interacts with phosphorylated ubiquitination substrates SMAD3 and SMAD4. Interacts with phosphorylated ubiquitination substrates CTNNB1, NFKBIA, NFKBIB, NFKBIE, NFKB1/nuclear factor NF-kappa-B p105 subunit, ATF4, CDC25A, DLG1, FBXO5 and SNAI1; the interaction requires the phosphorylation of the 2 serine residues in the substrate destruction motif D-S-G-X(2,3,4)-S. Binds UBQLN1. Interacts with CDC34 and UBE2R2. Interacts with FBXW11. Interacts with CUL4A and DDB1. Part of a SCF(BTRC)-like complex lacking CUL1, which is associated with phosphorylated NKBIA and RELA; RELA interacts directly with NFKBIA. Interacts with the phosphorylated form of GLI3. Interacts with CLU. Interacts with PER1 (phosphorylated), PER2 (phosphorylated) and PER3. Interacts with phosphorylated ubiquitination substrate CEP68. Interacts with ZC3H12A; this interaction occurs when ZC3H12A is phosphorylated in a IKBKB/IKKB-dependent manner. Interacts with HSF1; this interaction occurs during mitosis and induces HSF1 ubiquitin-dependent degradation, a process inhibited by CDC20. Interacts with NFE2L1. Interacts with INAVA. Interacts with IL10RA; this interaction leads to IL10RA ubiquitination and subsequent degradation. Interacts with REST. Interacts with KLF4; this interaction leads to KLF4 ubiquitination and subsequent degradation. Interacts with UBR2, as part of a SCF(BTRC) complex; the interaction mediates 'Lys-48'-linked ubiquitination of UBR2 and is regulated by DUSP22 in the T-cell receptor signaling pathway. Ubiquitinated via 'Lys-11'-linked polyubiquitin by some cullin-5-RING E3 ubiquitin-protein ligase complex (ECS complex), leading to its degradation. Deubiquitinated by OTUD5, promoting its stability. Expressed in heart, brain, liver, skeletal muscle and, most strongly, in testis.

The protein localises to the cytoplasm. Its subcellular location is the nucleus. It functions in the pathway protein modification; protein ubiquitination. In terms of biological role, substrate recognition component of a SCF (SKP1-CUL1-F-box protein) E3 ubiquitin-protein ligase complex which mediates the ubiquitination and subsequent proteasomal degradation of target proteins. Recognizes and binds to phosphorylated target proteins. SCF(BTRC) mediates the ubiquitination of phosphorylated NFKB, ATF4, CDC25A, DLG1, FBXO5, PER1, SMAD3, SMAD4, SNAI1 and probably NFKB2. SCF(BTRC) mediates the ubiquitination of CTNNB1 and participates in Wnt signaling. SCF(BTRC) mediates the ubiquitination of NFKBIA, NFKBIB and NFKBIE; the degradation frees the associated NFKB1 to translocate into the nucleus and to activate transcription. Ubiquitination of NFKBIA occurs at 'Lys-21' and 'Lys-22'. The SCF(FBXW11) complex also regulates NF-kappa-B by mediating ubiquitination of phosphorylated NFKB1: specifically ubiquitinates the p105 form of NFKB1, leading to its degradation. SCF(BTRC) mediates the ubiquitination of CEP68; this is required for centriole separation during mitosis. SCF(BTRC) mediates the ubiquitination and subsequent degradation of nuclear NFE2L1. Has an essential role in the control of the clock-dependent transcription via degradation of phosphorylated PER1 and PER2. May be involved in ubiquitination and subsequent proteasomal degradation through a DBB1-CUL4 E3 ubiquitin-protein ligase. Required for activation of NFKB-mediated transcription by IL1B, MAP3K14, MAP3K1, IKBKB and TNF. Required for proteolytic processing of GLI3. Mediates ubiquitination of REST, thereby leading to its proteasomal degradation. SCF(BTRC) mediates the ubiquitination and subsequent proteasomal degradation of KLF4; thereby negatively regulating cell pluripotency maintenance and embryogenesis. SCF(BTRC) acts as a regulator of mTORC1 signaling pathway by catalyzing ubiquitination and subsequent proteasomal degradation of phosphorylated DEPTOR, TFE3 and MITF. SCF(BTRC) directs 'Lys-48'-linked ubiquitination of UBR2 in the T-cell receptor signaling pathway. This is F-box/WD repeat-containing protein 1A from Mus musculus (Mouse).